Reading from the N-terminus, the 340-residue chain is DnaJ homolog subfamily B member 1 (340 aa).

The J domain occupies 2-70 (GKDYYQTLGL…REIFDRYGEE (69 aa)). Residue threonine 307 is modified to Phosphothreonine.

As to quaternary structure, interacts with DNAJC3. Interacts with HSF1 (via transactivation domain); this interaction results in the inhibition of heat shock- and HSF1-induced transcriptional activity during the attenuation and recovery phase period of the heat shock response. Interacts with BAG3.

The protein resides in the cytoplasm. It localises to the nucleus. The protein localises to the nucleolus. In terms of biological role, interacts with HSP70 and can stimulate its ATPase activity. Stimulates the association between HSC70 and HIP. Negatively regulates heat shock-induced HSF1 transcriptional activity during the attenuation and recovery phase period of the heat shock response. Stimulates ATP hydrolysis and the folding of unfolded proteins mediated by HSPA1A/B (in vitro). The protein is DnaJ homolog subfamily B member 1 (DNAJB1) of Homo sapiens (Human).